A 346-amino-acid chain; its full sequence is Olfactory receptor 8G5 (346 aa).

At 1 to 60 (MIIYKQGITFLQKENNNTIHLNTMFFLSPAETHQRMAAENHSFVTKFILVGLTEKSELQL) the chain is on the extracellular side. N-linked (GlcNAc...) asparagine glycosylation is found at N16 and N40. Residues 61–81 (PLFLVFLGIYVVTVLGNLGMI) traverse the membrane as a helical segment. Residues 82–89 (TLIGLSSH) lie on the Cytoplasmic side of the membrane. Residues 90-110 (LHTPMYCFLSSLSFIDFCHST) traverse the membrane as a helical segment. The Extracellular segment spans residues 111 to 134 (VITPKMLVNFVTEKNIISYPECMT). A disulfide bridge connects residues C132 and C214. The helical transmembrane segment at 135–155 (QLYFFLVFAIAECHMLAAMAY) threads the bilayer. The Cytoplasmic segment spans residues 156–174 (DGYVAICSPLLYSIIISNK). Residues 175–195 (ACFSLILVVYVIGLICASAHI) form a helical membrane-spanning segment. Over 196 to 232 (GCMFRVQFCKFDVINHYFCDLISILKLSCSSTYINEL) the chain is Extracellular. The helical transmembrane segment at 233–252 (LILIFSGINILVPSLTILSS) threads the bilayer. Residues 253 to 272 (YIFIIASILRIRYTEGRSKA) lie on the Cytoplasmic side of the membrane. The helical transmembrane segment at 273-293 (FSTCSSHISAVSVFFGSAAFM) threads the bilayer. Residues 294–306 (YLQPSSVSSMDQG) are Extracellular-facing. A helical membrane pass occupies residues 307 to 327 (KVSSVFYTIVVPMLNPLIYSL). Over 328-346 (RNKDVHVALKKTLGKRTFL) the chain is Cytoplasmic.

Belongs to the G-protein coupled receptor 1 family.

The protein resides in the cell membrane. Odorant receptor. This is Olfactory receptor 8G5 (OR8G5) from Homo sapiens (Human).